Reading from the N-terminus, the 373-residue chain is MAKSHLLPWLLLLPILCGPGTAAAITYSLACAQGPEFWCQSLEQALQCRALGHCLQEVWGHVEADDLCQECENISRLLTKMAKEAIFQDSVRKFLEQECDVLPLKLLAPLCRHLLDTYFPLIIEHFQSHMNPKFICQHVGLCKPRHPEPGKGPEPWGPLLDKLALPLLPGVPQAKPGPQTQDLSEQLFPIPIPYCWLCRTLIKRIQAVIPKGVLAMTVAQVCHVVPLLVGGICQCLVERYSVILLDTLLGRMLPQLVCGLVLRCSSEDSAGPALPALGSVPGEWLPQDSDCQLCMFVTTQAGNSSEQATPQAMRQACLGTWLDRQKCERFVEENAPRLQTLVSSGWDAHMACQALGTCAAPFSPLQCVHSPHF.

Residues 1-22 (MAKSHLLPWLLLLPILCGPGTA) form the signal peptide. The propeptide occupies 23 to 187 (AAITYSLACA…PQTQDLSEQL (165 aa)). One can recognise a Saposin A-type domain in the interval 24-64 (AITYSLACAQGPEFWCQSLEQALQCRALGHCLQEVWGHVEA). Saposin B-type domains are found at residues 64–146 (ADDL…KPRH), 191–268 (PIPY…SSED), and 287–362 (QDSD…AAPF). 9 cysteine pairs are disulfide-bonded: Cys68–Cys142, Cys71–Cys136, Cys99–Cys111, Cys195–Cys264, Cys198–Cys258, Cys222–Cys233, Cys291–Cys358, Cys294–Cys352, and Cys317–Cys327. Asn73 carries N-linked (GlcNAc...) asparagine glycosylation. The propeptide occupies 267–373 (EDSAGPALPA…PLQCVHSPHF (107 aa)). Asn303 carries N-linked (GlcNAc...) asparagine glycosylation.

Homodimer; disulfide-linked.

It is found in the secreted. It localises to the extracellular space. Its subcellular location is the surface film. Pulmonary surfactant-associated proteins promote alveolar stability by lowering the surface tension at the air-liquid interface in the peripheral air spaces. SP-B increases the collapse pressure of palmitic acid to nearly 70 millinewtons per meter. This chain is Pulmonary surfactant-associated protein B (SFTPB), found in Bos taurus (Bovine).